A 689-amino-acid chain; its full sequence is Protein CFAP20DC (689 aa).

Disordered regions lie at residues 241–263 (LKST…NRIE), 333–423 (SKES…GPSE), and 584–659 (ISTS…DLSV). Composition is skewed to polar residues over residues 251-260 (TPSGSSSGNN) and 343-359 (EESQ…SSRP). The span at 394–405 (SEDDFYGGDSSE) shows a compositional bias: acidic residues. Polar residues predominate over residues 409 to 421 (HSIQGSRGPTTGP). Residues 584–593 (ISTSSDDTTT) show a composition bias toward low complexity.

This chain is Protein CFAP20DC, found in Homo sapiens (Human).